Here is a 281-residue protein sequence, read N- to C-terminus: Small ribosomal subunit biogenesis GTPase RsgA (281 aa).

Positions 59-212 (QNEFIRPKVA…LIDTPGFSSL (154 aa)) constitute a CP-type G domain. GTP contacts are provided by residues 108 to 111 (TKAD) and 155 to 163 (GQSGVGKTT). Zn(2+)-binding residues include Cys235, Cys240, His242, and Cys250.

It belongs to the TRAFAC class YlqF/YawG GTPase family. RsgA subfamily. In terms of assembly, monomer. Associates with 30S ribosomal subunit, binds 16S rRNA. The cofactor is Zn(2+).

Its subcellular location is the cytoplasm. Its function is as follows. One of several proteins that assist in the late maturation steps of the functional core of the 30S ribosomal subunit. Helps release RbfA from mature subunits. May play a role in the assembly of ribosomal proteins into the subunit. Circularly permuted GTPase that catalyzes slow GTP hydrolysis, GTPase activity is stimulated by the 30S ribosomal subunit. This Mycoplasmopsis agalactiae (strain NCTC 10123 / CIP 59.7 / PG2) (Mycoplasma agalactiae) protein is Small ribosomal subunit biogenesis GTPase RsgA.